The following is a 358-amino-acid chain: RuBisCO accumulation factor 1 (358 aa).

The interval 11–194 (VSAAEAAELI…RQAIEKLLTD (184 aa)) is N-terminal alpha-helix. The interval 218 to 344 (ARLIPVAGTF…VVLVLRPKKI (127 aa)) is C-terminal beta-sheet.

It belongs to the RAF family. As to quaternary structure, homodimer. Forms an RbcL(8)-Raf1(8) complex. Forms complexes of many stoichiometries with RbcL with and without RbcS. RbcX and Raf1 can bind simultaneously to RbcL. Interacts with both RuBisCO subunits (ccbL, ccbS), GroEL, DnaK and alpha and beta phycocyanin (cpcA, cpcB) in pull-down experiments with tagged protein. C-terminally tagged Raf1 does not interact with either RuBisCO subunit, suggesting its C-terminus is involved in binding.

The protein resides in the cytoplasm. Functionally, a major RuBisCO chaperone. Acts after GroEL-GroES chaperonin to fold and/or assemble the large subunit of RuBisCO (ccbL, rbcL). Cooperates with RbcX in RbcL folding, plays the major role in assembly of dimers into RbcL(8)-Raf1(8) intermediate complexes. RbcS replaces Raf1, leading to holoenzyme formation. In terms of biological role, required for optimal reconstitution of RbcL(8) upon expression in E.coli. Has been suggested to be involved in RuBisCO recycling and homeostasis rather than assembly. The protein is RuBisCO accumulation factor 1 of Synechocystis sp. (strain ATCC 27184 / PCC 6803 / Kazusa).